The primary structure comprises 156 residues: Baculoviral IAP repeat-containing protein 5.2 (156 aa).

The stretch at 30-100 (RLSTFANWPF…KHSPSCLFIA (71 aa)) is one BIR repeat. The residue at position 46 (Thr46) is a Phosphothreonine; by CDK1. Residues Cys69, Cys72, His89, and Cys96 each coordinate Zn(2+).

This sequence belongs to the IAP family. In terms of assembly, component of the CPC at least composed of survivin/birc5, incenp, cdca8/borealin and/or cdca9/dasra-A, and aurkb/aurora-B. Interacts directly with incenp (via N-terminus). Interacts with rxra; the interaction is stronger in the absence of 9-cis retinoic acids. Ubiquitination is required for centrosome-targeting.

The protein resides in the cytoplasm. Its subcellular location is the nucleus. The protein localises to the chromosome. It is found in the centromere. It localises to the cytoskeleton. The protein resides in the spindle. Functionally, component of the chromosomal passenger complex (CPC), a complex that acts as a key regulator of mitosis. The CPC complex has essential functions at the centromere in ensuring correct chromosome alignment and segregation and is required for chromatin-induced microtubule stabilization and spindle assembly. Does not appear to exhibit anti-apoptotic activity. Plays a role in increasing blood vessel size during development. This Xenopus tropicalis (Western clawed frog) protein is Baculoviral IAP repeat-containing protein 5.2 (birc5.2).